We begin with the raw amino-acid sequence, 637 residues long: 1-deoxy-D-xylulose-5-phosphate synthase (637 aa).

Thiamine diphosphate contacts are provided by residues His72 and 113–115 (GHA). Asp144 serves as a coordination point for Mg(2+). Thiamine diphosphate-binding positions include 145 to 146 (GA), Asn174, Tyr287, and Glu370. Asn174 is a binding site for Mg(2+).

This sequence belongs to the transketolase family. DXPS subfamily. As to quaternary structure, homodimer. The cofactor is Mg(2+). Requires thiamine diphosphate as cofactor.

The catalysed reaction is D-glyceraldehyde 3-phosphate + pyruvate + H(+) = 1-deoxy-D-xylulose 5-phosphate + CO2. It participates in metabolic intermediate biosynthesis; 1-deoxy-D-xylulose 5-phosphate biosynthesis; 1-deoxy-D-xylulose 5-phosphate from D-glyceraldehyde 3-phosphate and pyruvate: step 1/1. In terms of biological role, catalyzes the acyloin condensation reaction between C atoms 2 and 3 of pyruvate and glyceraldehyde 3-phosphate to yield 1-deoxy-D-xylulose-5-phosphate (DXP). This Prochlorococcus marinus subsp. pastoris (strain CCMP1986 / NIES-2087 / MED4) protein is 1-deoxy-D-xylulose-5-phosphate synthase.